Here is a 373-residue protein sequence, read N- to C-terminus: Nodulation protein NolL (373 aa).

9 consecutive transmembrane segments (helical) span residues 27 to 47 (DFAK…QYLI), 62 to 82 (SIYM…SSGA), 98 to 118 (QLLL…SAVI), 140 to 160 (WFIW…TFNR), 164 to 184 (WIIS…SITP), 212 to 232 (RYKW…FLGW), 253 to 273 (QVFL…QSMF), 286 to 306 (RFVA…QGAV), and 324 to 344 (RITF…AIRS).

It belongs to the acyltransferase 3 family.

The protein resides in the cell membrane. Thought to be an acetyltransferase that modifies the fucose of the nod factor. This Mesorhizobium japonicum (strain LMG 29417 / CECT 9101 / MAFF 303099) (Mesorhizobium loti (strain MAFF 303099)) protein is Nodulation protein NolL (nolL).